The sequence spans 260 residues: Putative methylesterase 19 (260 aa).

The active-site Acyl-ester intermediate is Ser81. Active-site charge relay system residues include Asp210 and His238.

The protein belongs to the AB hydrolase superfamily. Methylesterase family.

Its function is as follows. Putative methylesterase. This Arabidopsis thaliana (Mouse-ear cress) protein is Putative methylesterase 19.